A 359-amino-acid chain; its full sequence is MITVNVDLGDRAYPIHIGAGLIGRAELFAPHIKGSSVTVVTNTTVDPLYGDALRAALAPLGKHVSTVVLPDGEAYKNWETLNLIFDGLLGERADRKTTLVALGGGVIGDMTGFAAACYMRGVPFIQVPTTLLSQVDSSVGGKTGINHPLGKNMIGAFYQPQAVIADIGALTTLPERELAAGIAEVIKTGAIADAAFFDWIEANVDALNRRDPAALAHAVKRSCEIKASVVAADEREGGLRAILNFGHTFGHAIEAGLGYGEWLHGEAVGCGMVMAADLSVRLGLLDDASRQRLDAVIAAAHLPTRGPALGDARYMELMRVDKKAEAGAIKFILLKRFGDTLITQAPDEAVFATLAHTTR.

Residues 71-76 (DGEAYK), 105-109 (GVIGD), 129-130 (TT), K142, and K151 contribute to the NAD(+) site. 3 residues coordinate Zn(2+): E184, H247, and H264.

The protein belongs to the sugar phosphate cyclases superfamily. Dehydroquinate synthase family. The cofactor is Co(2+). Zn(2+) is required as a cofactor. NAD(+) serves as cofactor.

It is found in the cytoplasm. It catalyses the reaction 7-phospho-2-dehydro-3-deoxy-D-arabino-heptonate = 3-dehydroquinate + phosphate. Its pathway is metabolic intermediate biosynthesis; chorismate biosynthesis; chorismate from D-erythrose 4-phosphate and phosphoenolpyruvate: step 2/7. In terms of biological role, catalyzes the conversion of 3-deoxy-D-arabino-heptulosonate 7-phosphate (DAHP) to dehydroquinate (DHQ). This is 3-dehydroquinate synthase from Burkholderia multivorans (strain ATCC 17616 / 249).